A 180-amino-acid polypeptide reads, in one-letter code: Peptide deformylase (180 aa).

The Fe cation site is built by Cys-96 and His-138. Residue Glu-139 is part of the active site. His-142 serves as a coordination point for Fe cation.

It belongs to the polypeptide deformylase family. The cofactor is Fe(2+).

It carries out the reaction N-terminal N-formyl-L-methionyl-[peptide] + H2O = N-terminal L-methionyl-[peptide] + formate. Functionally, removes the formyl group from the N-terminal Met of newly synthesized proteins. Requires at least a dipeptide for an efficient rate of reaction. N-terminal L-methionine is a prerequisite for activity but the enzyme has broad specificity at other positions. This Rhodopseudomonas palustris (strain BisA53) protein is Peptide deformylase.